The sequence spans 119 residues: C-C motif chemokine 24 (119 aa).

The first 26 residues, 1 to 26 (MAGLATFVVSLLLVTLCAHCIDPAGS), serve as a signal peptide directing secretion. 2 disulfide bridges follow: C33–C58 and C34–C74. N54 and N115 each carry an N-linked (GlcNAc...) asparagine glycan.

Belongs to the intercrine beta (chemokine CC) family.

The protein localises to the secreted. Chemotactic for resting T-lymphocytes, and eosinophils. Has lower chemotactic activity for neutrophils but none for monocytes and activated lymphocytes. Is a strong suppressor of colony formation by a multipotential hematopoietic progenitor cell line. Binds to CCR3. This Canis lupus familiaris (Dog) protein is C-C motif chemokine 24.